Consider the following 131-residue polypeptide: MTTKRKPYVRPMTSTWWKKLPFYRFYMLREGTAVPAVWFSIELIFGLFALKNGPEAWAGFVDFLQNPVIVIINLITLAAALLHTKTWFELAPKAANIIVKDEKMGPEPIIKSLWAVTVVATIVILFVALYW.

A run of 3 helical transmembrane segments spans residues 30–50 (EGTA…LFAL), 63–83 (FLQN…ALLH), and 109–129 (IIKS…FVAL).

It belongs to the FrdC family. In terms of assembly, part of an enzyme complex containing four subunits: a flavoprotein (FrdA), an iron-sulfur protein (FrdB), and two hydrophobic anchor proteins (FrdC and FrdD).

The protein localises to the cell inner membrane. Its function is as follows. Two distinct, membrane-bound, FAD-containing enzymes are responsible for the catalysis of fumarate and succinate interconversion; fumarate reductase is used in anaerobic growth, and succinate dehydrogenase is used in aerobic growth. Anchors the catalytic components of the fumarate reductase complex to the cell inner membrane, binds quinones. The polypeptide is Fumarate reductase subunit C (Shigella boydii serotype 18 (strain CDC 3083-94 / BS512)).